The chain runs to 515 residues: MASPNRHWPSMFRSNLACNIQQQQQPDMNGNGSSSSSFLLSPPTAATTGNGKPSLLSSGCEEGTRNPEPKPRWNPRPEQIRILEGIFNSGMVNPPRDEIRRIRLQLQEYGQVGDANVFYWFQNRKSRTKNKLRAAGHHHHHGRAAALPRASAPPSTNIVLPSAAAAAPLTPPRRHLLAATSSSSSSSDRSSGSSKSVKPAAAALLTSAAIDLFSPAPAPTTQLPACQLYYHSHPTPLARDDQLITSPESSSLLLQWPASQYMPATELGGVLGSSSHTQTPAAITTHPSTISPSVLLGLCNEALGQHQQETMDDMMITCSNPSKVFDHHSMDDMSCTDAVSAVNRDDEKARLGLLHYGIGVTAAANPAPHHHHHHHHLASPVHDAVSAADASTAAMILPFTTTAAATPSNVVATSSALADQLQGLLDAGLLQGGAAPPPPSATVVAVSRDDETMCTKTTSYSFPATMHLNVKMFGEAAVLVRYSGEPVLVDDSGVTVEPLQQGATYYVLVSEEAVH.

2 stretches are compositionally biased toward polar residues: residues 23-32 (QQQPDMNGNG) and 44-57 (TAAT…SLLS). Disordered stretches follow at residues 23–76 (QQQP…WNPR), 130–156 (NKLR…PPST), and 176–195 (LLAA…GSSK). Basic and acidic residues predominate over residues 62 to 71 (EGTRNPEPKP). The segment at residues 68-132 (EPKPRWNPRP…NRKSRTKNKL (65 aa)) is a DNA-binding region (homeobox; WUS-type). A compositionally biased stretch (basic residues) spans 130 to 143 (NKLRAAGHHHHHGR). Low complexity-rich tracts occupy residues 144–156 (AAAL…PPST) and 177–195 (LAAT…GSSK).

It belongs to the WUS homeobox family.

It is found in the nucleus. Transcription factor which may be involved in developmental processes. In Oryza sativa subsp. japonica (Rice), this protein is WUSCHEL-related homeobox 12 (WOX12).